A 538-amino-acid polypeptide reads, in one-letter code: Putative outer membrane porin BglH (538 aa).

The first 25 residues, 1-25, serve as a signal peptide directing secretion; sequence MFRRNLITSAILLMAPLAFSAQSLA. Positions 52–82 are disordered; the sequence is KDEEKKKYTPATVNRSVSTNDQGYAANPFPT. Over residues 62–73 the composition is skewed to polar residues; the sequence is ATVNRSVSTNDQ.

Belongs to the porin LamB (TC 1.B.3) family.

The protein localises to the cell outer membrane. Functionally, may be a sugar porin with a broad carbohydrate specificity. In Shigella sonnei (strain Ss046), this protein is Putative outer membrane porin BglH (bglH).